Consider the following 189-residue polypeptide: Potassium-transporting ATPase KdpC subunit (189 aa).

Residues 11-31 (LFVLLTVITGVLYPVFVTGLA) form a helical membrane-spanning segment.

Belongs to the KdpC family. The system is composed of three essential subunits: KdpA, KdpB and KdpC.

It is found in the cell inner membrane. In terms of biological role, part of the high-affinity ATP-driven potassium transport (or Kdp) system, which catalyzes the hydrolysis of ATP coupled with the electrogenic transport of potassium into the cytoplasm. This subunit acts as a catalytic chaperone that increases the ATP-binding affinity of the ATP-hydrolyzing subunit KdpB by the formation of a transient KdpB/KdpC/ATP ternary complex. The sequence is that of Potassium-transporting ATPase KdpC subunit from Polynucleobacter asymbioticus (strain DSM 18221 / CIP 109841 / QLW-P1DMWA-1) (Polynucleobacter necessarius subsp. asymbioticus).